The primary structure comprises 92 residues: MKVSTTALAVLLCTMTLCNQVFSAPYGADTPTACCFSYSRKIPRQFIVDYFETSSLCSQPGVIFLTKRNRQICADSKETWVQEYITDLELNA.

A signal peptide spans 1-23 (MKVSTTALAVLLCTMTLCNQVFS). 2 cysteine pairs are disulfide-bonded: Cys34–Cys57 and Cys35–Cys73.

The protein belongs to the intercrine beta (chemokine CC) family. In terms of assembly, self-associates. Also heterodimer of MIP-1-alpha(4-69) and MIP-1-beta(3-69). Interacts with CCR1. Expressed in lung, spleen, and pancreas.

The protein resides in the secreted. Its function is as follows. Monokine with inflammatory and chemokinetic properties. Binds to CCR1, CCR4 and CCR5. One of the major HIV-suppressive factors produced by CD8+ T-cells. Recombinant MIP-1-alpha induces a dose-dependent inhibition of different strains of HIV-1, HIV-2, and simian immunodeficiency virus (SIV). In Mus musculus (Mouse), this protein is C-C motif chemokine 3 (Ccl3).